Reading from the N-terminus, the 282-residue chain is Trihydroxynaphthalene reductase (282 aa).

Residues Ile41, Asn114, and Arg147 each coordinate NADP(+). Active-site proton donor residues include Ser164 and Tyr178. NADP(+) contacts are provided by Tyr178, Lys182, Ile211, and Thr213. Lys182 acts as the Lowers pKa of active site Tyr in catalysis.

It belongs to the short-chain dehydrogenases/reductases (SDR) family. In terms of assembly, homotetramer.

It participates in pigment biosynthesis; melanin biosynthesis. Functionally, catalyzes the NADPH-dependent reduction of 1,3,8-trihydroxynaphthalene (T3HN) into (-)-vermelone. Essential for appressorial penetration of colletotrichum lagenarium. This chain is Trihydroxynaphthalene reductase (THR1), found in Colletotrichum orbiculare (strain 104-T / ATCC 96160 / CBS 514.97 / LARS 414 / MAFF 240422) (Cucumber anthracnose fungus).